The chain runs to 308 residues: Methionine synthase (308 aa).

Residues His192, Cys194, Glu215, and Cys282 each coordinate Zn(2+).

Belongs to the archaeal MetE family. It depends on Zn(2+) as a cofactor.

It participates in amino-acid biosynthesis; L-methionine biosynthesis via de novo pathway. Functionally, catalyzes the transfer of a methyl group to L-homocysteine resulting in methionine formation. Can use methylcobalamin and methylcobinamide as methyl donors, but methylcobalamin is not considered to be the physiological substrate. The protein is Methionine synthase of Methanocaldococcus jannaschii (strain ATCC 43067 / DSM 2661 / JAL-1 / JCM 10045 / NBRC 100440) (Methanococcus jannaschii).